An 83-amino-acid chain; its full sequence is RNA-binding protein Hfq (83 aa).

The Sm domain maps to 10 to 69; that stretch reads DPFLNALRREHVPVSIYLVNGIKLQGQIESFDQYVVLLRNTVTQMVYKHAISTIVPGRAV.

Belongs to the Hfq family. As to quaternary structure, homohexamer.

Its function is as follows. RNA chaperone that binds small regulatory RNA (sRNAs) and mRNAs to facilitate mRNA translational regulation in response to envelope stress, environmental stress and changes in metabolite concentrations. Also binds with high specificity to tRNAs. The protein is RNA-binding protein Hfq of Delftia acidovorans (strain DSM 14801 / SPH-1).